Consider the following 103-residue polypeptide: MVARSKGYRSKTRKLLEKKVREKGAIPKLSLLMHDYSQGEYVVVKINPSIHKGMPHRRYHGKVGLVVGKRGKAYEVKVNIGDKERVLIVRPEHLIPFNGIQKR.

Belongs to the eukaryotic ribosomal protein eL21 family.

This Sulfolobus acidocaldarius (strain ATCC 33909 / DSM 639 / JCM 8929 / NBRC 15157 / NCIMB 11770) protein is Large ribosomal subunit protein eL21.